We begin with the raw amino-acid sequence, 301 residues long: tRNA uridine(34) hydroxylase (301 aa).

Residues 121–212 form the Rhodanese domain; that stretch reads NDKDTLVLDS…YLKNIKKKES (92 aa). C172 acts as the Cysteine persulfide intermediate in catalysis.

Belongs to the TrhO family.

The enzyme catalyses uridine(34) in tRNA + AH2 + O2 = 5-hydroxyuridine(34) in tRNA + A + H2O. Catalyzes oxygen-dependent 5-hydroxyuridine (ho5U) modification at position 34 in tRNAs. The sequence is that of tRNA uridine(34) hydroxylase from Pelagibacter ubique (strain HTCC1062).